A 62-amino-acid polypeptide reads, in one-letter code: Large ribosomal subunit protein uL29 (62 aa).

The protein belongs to the universal ribosomal protein uL29 family.

The sequence is that of Large ribosomal subunit protein uL29 from Enterococcus faecalis (strain ATCC 700802 / V583).